Reading from the N-terminus, the 599-residue chain is BICD family-like cargo adapter 1 (599 aa).

The tract at residues 1 to 27 (MELPISFLSDSSRPAASSERGDQAALG) is disordered. Positions 76–80 (AARLG) match the CC1 box motif. Residues 80-341 (GKALLERNQD…WEAHCQVRSL (262 aa)) adopt a coiled-coil conformation. Residues 352 to 375 (DSAVSTDSSMDESSETSSAKDVPA) form a disordered region. The stretch at 405–536 (EDDGLEEQIK…LEAWQDDMHR (132 aa)) forms a coiled coil.

Belongs to the BICDR family. As to quaternary structure, part of a tripartite complex with dynein and dynactin, acts an adapter linking the dynein motor complex and dynactin. Interacts with KIF1C. Interacts with RAB6A and RAB6B; interaction is specific to Rab6.

The protein localises to the cytoplasm. Its subcellular location is the cytoskeleton. The protein resides in the microtubule organizing center. It is found in the centrosome. Functionally, acts as an adapter protein linking the dynein motor complex to various cargos and converts dynein from a non-processive to a highly processive motor in the presence of dynactin. Facilitates the interaction between dynein and dynactin and activates dynein processivity (the ability to move along a microtubule for a long distance without falling off the track). Predominantly recruits 2 dyneins, which increases both the force and speed of the microtubule motor. Component of secretory vesicle machinery in developing neurons that acts as a regulator of neurite outgrowth. Regulates the secretory vesicle transport by controlling the accumulation of Rab6-containing secretory vesicles in the pericentrosomal region restricting anterograde secretory transport during the early phase of neuronal differentiation, thereby inhibiting neuritogenesis. The protein is BICD family-like cargo adapter 1 (bicdl1) of Xenopus tropicalis (Western clawed frog).